A 387-amino-acid chain; its full sequence is Cystathionine gamma-lyase (387 aa).

Positions 53, 105, and 110 each coordinate substrate. An N6-(pyridoxal phosphate)lysine modification is found at Lys-202. Glu-329 is a substrate binding site.

This sequence belongs to the trans-sulfuration enzymes family. Homotetramer. Interacts with CALM in a calcium-dependent manner. Pyridoxal 5'-phosphate serves as cofactor.

Its subcellular location is the cytoplasm. It carries out the reaction L,L-cystathionine + H2O = 2-oxobutanoate + L-cysteine + NH4(+). It catalyses the reaction L-cysteine + H2O = hydrogen sulfide + pyruvate + NH4(+) + H(+). The enzyme catalyses L-homocysteine + H2O = 2-oxobutanoate + hydrogen sulfide + NH4(+) + H(+). The catalysed reaction is L-homoserine = 2-oxobutanoate + NH4(+). It functions in the pathway amino-acid biosynthesis; L-cysteine biosynthesis; L-cysteine from L-homocysteine and L-serine: step 2/2. In terms of biological role, catalyzes the last step in the trans-sulfuration pathway from L-methionine to L-cysteine in a pyridoxal-5'-phosphate (PLP)-dependent manner, which consists on cleaving the L,L-cystathionine molecule into L-cysteine, ammonia and 2-oxobutanoate. Part of the L-cysteine derived from the trans-sulfuration pathway is utilized for biosynthesis of the ubiquitous antioxidant glutathione. Besides its role in the conversion of L-cystathionine into L-cysteine, it utilizes L-cysteine and L-homocysteine as substrates (at much lower rates than L,L-cystathionine) to produce the endogenous gaseous signaling molecule hydrogen sulfide (H2S). This is Cystathionine gamma-lyase (cysA) from Dictyostelium discoideum (Social amoeba).